The sequence spans 308 residues: Mycothiol acetyltransferase (308 aa).

2 consecutive N-acetyltransferase domains span residues 12–149 (DVLD…RPLG) and 165–308 (VTVR…RTET). Glu43 is a binding site for 1D-myo-inositol 2-(L-cysteinylamino)-2-deoxy-alpha-D-glucopyranoside. 88–90 (LVV) provides a ligand contact to acetyl-CoA. Residues Glu192, Lys231, and Glu240 each coordinate 1D-myo-inositol 2-(L-cysteinylamino)-2-deoxy-alpha-D-glucopyranoside. Acetyl-CoA-binding positions include 244 to 246 (VGV) and 251 to 257 (QGGGLGR). Tyr278 contacts 1D-myo-inositol 2-(L-cysteinylamino)-2-deoxy-alpha-D-glucopyranoside.

It belongs to the acetyltransferase family. MshD subfamily. Monomer.

It catalyses the reaction 1D-myo-inositol 2-(L-cysteinylamino)-2-deoxy-alpha-D-glucopyranoside + acetyl-CoA = mycothiol + CoA + H(+). Functionally, catalyzes the transfer of acetyl from acetyl-CoA to desacetylmycothiol (Cys-GlcN-Ins) to form mycothiol. This is Mycothiol acetyltransferase from Streptomyces bingchenggensis (strain BCW-1).